Here is a 119-residue protein sequence, read N- to C-terminus: Ribonuclease P protein component (119 aa).

Belongs to the RnpA family. As to quaternary structure, consists of a catalytic RNA component (M1 or rnpB) and a protein subunit.

It catalyses the reaction Endonucleolytic cleavage of RNA, removing 5'-extranucleotides from tRNA precursor.. Its function is as follows. RNaseP catalyzes the removal of the 5'-leader sequence from pre-tRNA to produce the mature 5'-terminus. It can also cleave other RNA substrates such as 4.5S RNA. The protein component plays an auxiliary but essential role in vivo by binding to the 5'-leader sequence and broadening the substrate specificity of the ribozyme. The chain is Ribonuclease P protein component from Aeromonas hydrophila subsp. hydrophila (strain ATCC 7966 / DSM 30187 / BCRC 13018 / CCUG 14551 / JCM 1027 / KCTC 2358 / NCIMB 9240 / NCTC 8049).